The sequence spans 248 residues: 2,3-bisphosphoglycerate-dependent phosphoglycerate mutase (248 aa).

Residues 8 to 15, 21 to 22, R60, 87 to 90, K98, 114 to 115, and 183 to 184 each bind substrate; these read RHGESIWN, TG, EKHY, RR, and GN. The active-site Tele-phosphohistidine intermediate is H9. The active-site Proton donor/acceptor is the E87.

Belongs to the phosphoglycerate mutase family. BPG-dependent PGAM subfamily.

It carries out the reaction (2R)-2-phosphoglycerate = (2R)-3-phosphoglycerate. The protein operates within carbohydrate degradation; glycolysis; pyruvate from D-glyceraldehyde 3-phosphate: step 3/5. In terms of biological role, catalyzes the interconversion of 2-phosphoglycerate and 3-phosphoglycerate. This chain is 2,3-bisphosphoglycerate-dependent phosphoglycerate mutase, found in Parabacteroides distasonis (strain ATCC 8503 / DSM 20701 / CIP 104284 / JCM 5825 / NCTC 11152).